Reading from the N-terminus, the 171-residue chain is UPF0312 protein MW2606 (171 aa).

Belongs to the UPF0312 family.

The chain is UPF0312 protein MW2606 from Staphylococcus aureus (strain MW2).